The sequence spans 242 residues: Ribonuclease PH (242 aa).

Phosphate is bound by residues arginine 87 and 125 to 127; that span reads STR.

This sequence belongs to the RNase PH family. As to quaternary structure, homohexameric ring arranged as a trimer of dimers.

The catalysed reaction is tRNA(n+1) + phosphate = tRNA(n) + a ribonucleoside 5'-diphosphate. In terms of biological role, phosphorolytic 3'-5' exoribonuclease that plays an important role in tRNA 3'-end maturation. Removes nucleotide residues following the 3'-CCA terminus of tRNAs; can also add nucleotides to the ends of RNA molecules by using nucleoside diphosphates as substrates, but this may not be physiologically important. Probably plays a role in initiation of 16S rRNA degradation (leading to ribosome degradation) during starvation. This is Ribonuclease PH from Synechococcus sp. (strain JA-3-3Ab) (Cyanobacteria bacterium Yellowstone A-Prime).